We begin with the raw amino-acid sequence, 311 residues long: Ribosomal RNA small subunit methyltransferase H (311 aa).

Residues 32–34 (AGH), Asp-52, Phe-79, Asp-100, and Gln-107 contribute to the S-adenosyl-L-methionine site.

It belongs to the methyltransferase superfamily. RsmH family.

The protein resides in the cytoplasm. The enzyme catalyses cytidine(1402) in 16S rRNA + S-adenosyl-L-methionine = N(4)-methylcytidine(1402) in 16S rRNA + S-adenosyl-L-homocysteine + H(+). Its function is as follows. Specifically methylates the N4 position of cytidine in position 1402 (C1402) of 16S rRNA. The protein is Ribosomal RNA small subunit methyltransferase H of Staphylococcus aureus (strain Mu3 / ATCC 700698).